The following is a 305-amino-acid chain: Nitrogen assimilation regulatory protein nac (305 aa).

Residues 1–58 form the HTH lysR-type domain; sequence MNLRRLKYFVKIVDIGSLTQAAEVLHIAQPALSQQVATLEGEMDQQLLIRTKRGVTPT. Residues 18 to 37 constitute a DNA-binding region (H-T-H motif); it reads LTQAAEVLHIAQPALSQQVA.

It belongs to the LysR transcriptional regulatory family.

Transcriptional activator for the hut, put and ure operons and repressor for the gdh and gltB operons in response to nitrogen limitation. Negative regulator of its own expression. This is Nitrogen assimilation regulatory protein nac (nac) from Klebsiella aerogenes (Enterobacter aerogenes).